Consider the following 161-residue polypeptide: Transcription elongation factor GreA (161 aa).

Residues 43–68 (SENAEYEAAREKQAFVEARIKHLEDI) adopt a coiled-coil conformation.

It belongs to the GreA/GreB family.

Its function is as follows. Necessary for efficient RNA polymerase transcription elongation past template-encoded arresting sites. The arresting sites in DNA have the property of trapping a certain fraction of elongating RNA polymerases that pass through, resulting in locked ternary complexes. Cleavage of the nascent transcript by cleavage factors such as GreA or GreB allows the resumption of elongation from the new 3'terminus. GreA releases sequences of 2 to 3 nucleotides. This chain is Transcription elongation factor GreA, found in Rickettsia bellii (strain OSU 85-389).